A 279-amino-acid chain; its full sequence is Small ribosomal subunit protein uS2 (279 aa).

Composition is skewed to acidic residues over residues 1 to 18, 28 to 42, and 65 to 81; these read MTENDNEVVEVVDDDEAV, TATEAEADTETDESN, and ADAEPDDELEGPTFDED. The disordered stretch occupies residues 1–81; sequence MTENDNEVVE…ELEGPTFDED (81 aa).

The protein belongs to the universal ribosomal protein uS2 family.

This chain is Small ribosomal subunit protein uS2, found in Haloquadratum walsbyi (strain DSM 16790 / HBSQ001).